A 122-amino-acid polypeptide reads, in one-letter code: Large ribosomal subunit protein bL12 (122 aa).

The protein belongs to the bacterial ribosomal protein bL12 family. In terms of assembly, homodimer. Part of the ribosomal stalk of the 50S ribosomal subunit. Forms a multimeric L10(L12)X complex, where L10 forms an elongated spine to which 2 to 4 L12 dimers bind in a sequential fashion. Binds GTP-bound translation factors.

Functionally, forms part of the ribosomal stalk which helps the ribosome interact with GTP-bound translation factors. Is thus essential for accurate translation. This Actinobacillus succinogenes (strain ATCC 55618 / DSM 22257 / CCUG 43843 / 130Z) protein is Large ribosomal subunit protein bL12.